Here is a 445-residue protein sequence, read N- to C-terminus: UPF0210 protein SPT_0285 (445 aa).

Belongs to the UPF0210 family. Homodimer.

This chain is UPF0210 protein SPT_0285, found in Streptococcus pneumoniae (strain Taiwan19F-14).